Here is a 378-residue protein sequence, read N- to C-terminus: TelA-like protein SAS1347 (378 aa).

Belongs to the TelA family.

This is TelA-like protein SAS1347 from Staphylococcus aureus (strain MSSA476).